Here is a 372-residue protein sequence, read N- to C-terminus: tRNA-specific 2-thiouridylase MnmA (372 aa).

Residues Gly9 to Ser16 and Met35 each bind ATP. The tract at residues Asn95–Asp97 is interaction with target base in tRNA. Cys100 serves as the catalytic Nucleophile. Cys100 and Cys198 are oxidised to a cystine. Gly124 is an ATP binding site. Positions Lys148 to Gln150 are interaction with tRNA. Cys198 acts as the Cysteine persulfide intermediate in catalysis. The interaction with tRNA stretch occupies residues Arg317–Tyr318.

The protein belongs to the MnmA/TRMU family.

The protein localises to the cytoplasm. It carries out the reaction S-sulfanyl-L-cysteinyl-[protein] + uridine(34) in tRNA + AH2 + ATP = 2-thiouridine(34) in tRNA + L-cysteinyl-[protein] + A + AMP + diphosphate + H(+). In terms of biological role, catalyzes the 2-thiolation of uridine at the wobble position (U34) of tRNA, leading to the formation of s(2)U34. This is tRNA-specific 2-thiouridylase MnmA from Delftia acidovorans (strain DSM 14801 / SPH-1).